The sequence spans 144 residues: Cytochrome c3 (144 aa).

The signal sequence occupies residues 1–24; the sequence is MRYLVISLFAVSLLMAGSALVGNA. Residues His51, His54, Cys59, Cys62, His63, His64, Cys76, Cys81, His82, His100, Cys108, Cys111, His112, Cys125, Cys128, and His129 each coordinate heme c.

Belongs to the cytochrome c family. As to quaternary structure, homodimer. Heterotrimer of cytochrome c3 FDH2C and formate dehydrogenase FDH2 alpha and beta subunits that forms the FdhABC(3) complex. Binds 4 heme c groups per subunit.

The protein localises to the periplasm. Its function is as follows. Participates in sulfate respiration coupled with phosphorylation by transferring electrons from the enzyme dehydrogenase to ferredoxin. Gamma chain of the formate dehydrogenase (FDH) that catalyzes the reversible two-electron oxidation of formate to carbon dioxide. The gamma subunit of formate dehydrogenase forms a c-type heme. In Nitratidesulfovibrio vulgaris (strain ATCC 29579 / DSM 644 / CCUG 34227 / NCIMB 8303 / VKM B-1760 / Hildenborough) (Desulfovibrio vulgaris), this protein is Cytochrome c3.